Consider the following 469-residue polypeptide: GTPase Der (469 aa).

EngA-type G domains follow at residues 30-193 (PVLA…PEVA) and 203-376 (RRVA…ASWD). Residues 36 to 43 (GRPNVGKS), 83 to 87 (DTGGW), 145 to 148 (NKVD), 209 to 216 (GKPNVGKS), 256 to 260 (DTAGL), and 321 to 324 (NKWD) each bind GTP. Positions 377-459 (TRIPTGPLNS…PIRINVRVRE (83 aa)) constitute a KH-like domain.

Belongs to the TRAFAC class TrmE-Era-EngA-EngB-Septin-like GTPase superfamily. EngA (Der) GTPase family. Associates with the 50S ribosomal subunit.

GTPase that plays an essential role in the late steps of ribosome biogenesis. This chain is GTPase Der, found in Mycobacterium ulcerans (strain Agy99).